The sequence spans 110 residues: Nucleoid-associated protein Sfri_2406 (110 aa).

It belongs to the YbaB/EbfC family. As to quaternary structure, homodimer.

The protein localises to the cytoplasm. It is found in the nucleoid. Binds to DNA and alters its conformation. May be involved in regulation of gene expression, nucleoid organization and DNA protection. The protein is Nucleoid-associated protein Sfri_2406 of Shewanella frigidimarina (strain NCIMB 400).